The primary structure comprises 191 residues: A-type ATP synthase subunit E 1 (191 aa).

This sequence belongs to the V-ATPase E subunit family. Has multiple subunits with at least A(3), B(3), C, D, E, F, H, I and proteolipid K(x).

The protein localises to the cell membrane. Its function is as follows. Component of the A-type ATP synthase that produces ATP from ADP in the presence of a proton gradient across the membrane. This Methanospirillum hungatei JF-1 (strain ATCC 27890 / DSM 864 / NBRC 100397 / JF-1) protein is A-type ATP synthase subunit E 1.